We begin with the raw amino-acid sequence, 334 residues long: MKLDEIARLAGVSRTTASYVINGKAKQYRVSDKTVEKVMAVVREHNYHPNAVAAGLRAGRTRSIGLVIPDLENTSYTRIANYLERQARQRGYQLLIACSEDQPDNEMRCIEHLLQRQVDAIIVSTSLPPEHPFYQRWANDPFPIVALDRALDREHFTSVVGADQDDAEMLAEELRKFPAETVLYLGALPELSVSFLREQGFRTAWKDDPREVNFLYANSYEREAAAQLFEKWLETHPMPQALFTTSFALLQGVMDVTLRRDGKLPSDLAIATFGDHELLDFLQCPVLAVAQRHRDVAERVLEIVLASLDEPRKPKPGLTRIRRNLYRRGILSRS.

The region spanning 1–58 is the HTH lacI-type domain; it reads MKLDEIARLAGVSRTTASYVINGKAKQYRVSDKTVEKVMAVVREHNYHPNAVAAGLRA. Positions 3–22 form a DNA-binding region, H-T-H motif; sequence LDEIARLAGVSRTTASYVIN.

As to quaternary structure, homotetramer.

Its function is as follows. Global transcriptional regulator, which plays an important role in the regulation of carbon metabolism. This chain is Catabolite repressor/activator (cra), found in Salmonella typhimurium (strain LT2 / SGSC1412 / ATCC 700720).